The primary structure comprises 296 residues: uncharacterized protein (296 aa).

CBS domains lie at 176–232 (GIKE…DKKV) and 236–292 (MRRD…KFPE).

This is an uncharacterized protein from Methanocaldococcus jannaschii (strain ATCC 43067 / DSM 2661 / JAL-1 / JCM 10045 / NBRC 100440) (Methanococcus jannaschii).